The following is a 3902-amino-acid chain: Mediator of RNA polymerase II transcription subunit 12 (3902 aa).

10 disordered regions span residues 414-576 (ESLT…EELP), 619-674 (FEPF…NPKL), 694-940 (AFDP…LEAL), 977-1029 (VVEK…PEPP), 1812-1831 (TSHK…TETR), 2463-2675 (TVEP…NRKQ), 2719-2771 (AGAS…SSSM), 2876-3151 (RIME…PEMQ), 3195-3549 (LQAG…SSNQ), and 3563-3902 (AGLN…QQQY). Residues 420–430 (EPEEDPEEGPE) show a composition bias toward acidic residues. Residues 709–721 (PTPPEAPPPPPPV) show a composition bias toward pro residues. 4 stretches are compositionally biased toward basic and acidic residues: residues 740–802 (EDGK…EHLN), 912–928 (KAGD…KKPD), 977–1004 (VVEK…EKLP), and 1018–1027 (KTPEKPKTPE). Basic residues predominate over residues 1812–1824 (TSHKTKDVKRKSA). A required for nuclear localization region spans residues 2409 to 3902 (QTTRLDKVAK…MGQFPNQQQY (1494 aa)). Positions 2474-2547 (AAVKKPEEET…VTAKDTEKDT (74 aa)) are enriched in basic and acidic residues. A coiled-coil region spans residues 2480-2526 (EEETAEKKKDEAKKADEKTTKADDEKKKDETADAKKDNEKQKEEKDK). Composition is skewed to low complexity over residues 2548–2566 (AAPT…AAPD), 2614–2632 (SRAN…SSTT), and 2734–2748 (PHPG…QHQG). Basic and acidic residues predominate over residues 2876–2979 (RIMEEQRILR…ERLERERVAR (104 aa)). 4 stretches are compositionally biased toward low complexity: residues 2980-3001 (EALA…QAQQ), 3010-3143 (QQQR…QRNP), 3196-3205 (QAGQAAGQQQ), and 3226-3236 (PQQQQQQPQQP). A compositionally biased stretch (polar residues) spans 3237-3248 (GTSQIPNTTPTR). 3 stretches are compositionally biased toward low complexity: residues 3250–3275 (ANPM…GQPG), 3284–3295 (GQQQQNQFQRQG), and 3317–3389 (GQQQ…FGRQ). Residues 3391 to 3409 (APNQENFQQQPGFNQNAAG) show a composition bias toward polar residues. 3 stretches are compositionally biased toward low complexity: residues 3410-3446 (QNYQ…QQQN), 3454-3539 (QSQQ…QGNQ), and 3570-3619 (SSGN…RPGM). Residues 3620-3649 (GQQGMGQQGMGQQGGMGQSGRGQPGMGGQS) show a composition bias toward gly residues. Composition is skewed to low complexity over residues 3663–3700 (MGQP…QQQH), 3710–3742 (QQGR…QQAQ), and 3760–3830 (QQQQ…HRGQ). Residues 3831 to 3841 (GQQGHGMGGAG) are compositionally biased toward gly residues. The segment covering 3842–3888 (QQHQQVPQQQQNQYFQPQQQQDQRMQQQPGGQQQQQQGQSGQQQNNQ) has biased composition (low complexity). The segment covering 3889-3902 (HYNNMGQFPNQQQY) has biased composition (polar residues).

This sequence belongs to the Mediator complex subunit 12 family. As to quaternary structure, component of the Mediator complex.

The protein resides in the nucleus. Component of the Mediator complex, a coactivator involved in regulated gene transcription of nearly all RNA polymerase II-dependent genes. Mediator functions as a bridge to convey information from gene-specific regulatory proteins to the basal RNA polymerase II transcription machinery. Mediator is recruited to promoters by direct interactions with regulatory proteins and serves as a scaffold for the assembly of a functional preinitiation complex with RNA polymerase II and the general transcription factors. In Caenorhabditis briggsae, this protein is Mediator of RNA polymerase II transcription subunit 12 (dpy-22).